A 546-amino-acid polypeptide reads, in one-letter code: Chaperonin GroEL 1 (546 aa).

Residues 30–33, Lys-51, 87–91, Gly-415, 479–481, and Asp-495 contribute to the ATP site; these read TLGP, DGTTT, and NAA.

This sequence belongs to the chaperonin (HSP60) family. Forms a cylinder of 14 subunits composed of two heptameric rings stacked back-to-back. Interacts with the co-chaperonin GroES.

It localises to the cytoplasm. The catalysed reaction is ATP + H2O + a folded polypeptide = ADP + phosphate + an unfolded polypeptide.. In terms of biological role, together with its co-chaperonin GroES, plays an essential role in assisting protein folding. The GroEL-GroES system forms a nano-cage that allows encapsulation of the non-native substrate proteins and provides a physical environment optimized to promote and accelerate protein folding. This Vibrio vulnificus (strain CMCP6) protein is Chaperonin GroEL 1.